A 221-amino-acid polypeptide reads, in one-letter code: UPF0502 protein VSAL_II0605 (221 aa).

The protein belongs to the UPF0502 family.

The protein is UPF0502 protein VSAL_II0605 of Aliivibrio salmonicida (strain LFI1238) (Vibrio salmonicida (strain LFI1238)).